Here is a 449-residue protein sequence, read N- to C-terminus: Guanine nucleotide-binding protein alpha-2 subunit (449 aa).

The interval 1–91 (MGLCASSEKN…TATANTSGSQ (91 aa)) is disordered. The N-myristoyl glycine moiety is linked to residue Gly-2. The S-palmitoyl cysteine moiety is linked to residue Cys-4. 2 stretches are compositionally biased toward polar residues: residues 7–23 (SEKN…SAGS) and 38–48 (QKTVRTVNTAN). Positions 49 to 59 (QQEKQQQRQQQ) are enriched in low complexity. Polar residues predominate over residues 72–91 (NGSINNAISPTATANTSGSQ). The region spanning 122 to 448 (KELKVLLLGA…ENTLKDSGVL (327 aa)) is the G-alpha domain. The G1 motif stretch occupies residues 125-138 (KVLLLGAGESGKST). Positions 133, 134, 135, 136, 137, 138, 245, 270, 276, 299, 365, 366, 368, and 420 each coordinate GTP. Ser-137 serves as a coordination point for Mg(2+). The segment at 268 to 276 (DILRSRQMT) is G2 motif. Position 276 (Thr-276) interacts with Mg(2+). The segment at 292–301 (MHIYDVGGQR) is G3 motif. The tract at residues 361-368 (VLFLNKID) is G4 motif. The segment at 418-423 (TQATDT) is G5 motif.

Belongs to the G-alpha family. G(q) subfamily. As to quaternary structure, g proteins are composed of 3 units; alpha, beta and gamma. The alpha chain contains the guanine nucleotide binding site. GPA2 interacts with the kelch repeat beta-mimic proteins GPB1 and GPB2 and with the gamma subunit GPG1. Interacts with the G protein coupled receptor GPR1. Also interacts with regulators of G protein signaling (RGS) protein RGS2. The cofactor is Mg(2+). In terms of processing, myristoylation at Gly-2 and palmitoylation at Cys-4 are required for membrane localization and function of the protein.

It is found in the cell membrane. Its activity is regulated as follows. Alternates between an inactive form bound to GDP and an active form bound to GTP. Activated by the G protein coupled receptor (GPCR) GPR1, which serves as a guanine nucleotide-exchange factor (GEF), and inactivated by RGS2, acting as a GTPase-activating protein (GAP) for GPA2. Alpha subunit of the heterotrimeric guanine nucleotide-binding protein (G protein) involved in glucose-induced cAMP signaling. Binds to its cognate transmembrane receptor GPR1, which senses extracellular carbon sources, and activates cAMP-PKA signaling and governs diploid pseudohyphal differentiation and haploid invasive growth. The G protein beta-mimic proteins GPB1 and GPB2 inhibit GPA2-GPR1 coupling, probably to reduce signaling in the absence of glucose. This is Guanine nucleotide-binding protein alpha-2 subunit (GPA2) from Saccharomyces cerevisiae (strain ATCC 204508 / S288c) (Baker's yeast).